A 172-amino-acid chain; its full sequence is Centrin-2 (172 aa).

The segment covering 1–14 (MASNFKKTTMASSA) has biased composition (polar residues). The tract at residues 1–31 (MASNFKKTTMASSAQRKRMSPKPELTEDQKQ) is disordered. The residue at position 2 (A2) is an N-acetylalanine. Residues 2 to 25 (ASNFKKTTMASSAQRKRMSPKPEL) are required for self-assembly. S20 is modified (phosphoserine). Residue K22 forms a Glycyl lysine isopeptide (Lys-Gly) (interchain with G-Cter in SUMO2) linkage. T26 is modified (phosphothreonine). EF-hand domains lie at 28 to 63 (DQKQEIREAFDLFDADGTGTIDIKELKVAMRALGFE), 64 to 99 (PKKEEIKKMISEIDKEGTGKMNFSDFLTVMTQKMSE), 101 to 136 (DTKEEILKAFKLFDDDETGKISFKNLKRVAKELGEN), and 137 to 172 (LTDEELQEMIDEADRDGDGEVNEQEFLRIMKKTSLY). Residues D41, D43, T45, T47, and E52 each contribute to the Ca(2+) site. Ca(2+) contacts are provided by D150, D152, D154, E156, and E161.

This sequence belongs to the centrin family. As to quaternary structure, monomer. Homooligomer. Interacts with CCP110, SFI1. Component of the XPC complex composed of XPC, RAD23B and CETN2. Component of the nuclear pore complex (NPC)-associated TREX-2 complex (transcription and export complex 2), composed of at least GANP, 2 copies of ENY2, PCID2, SEM1/DSS1, and either centrin CETN2 or centrin CETN3. The TREX-2 complex also associates with ALYREF/ALY and with the nucleoporin NUP153. Interacts with USP49. Forms a microtubule-associated complex with POC5, POC1B and FAM161A. Interacts with CCDC15. Ubiquitously expressed in all adult tissues tested, with strongest expression in brain, spleen, kidney, small intestine and ovary. Also expressed in the NIH 3T3 fibroblast cell line and peripheral blood lymphocytes.

The protein localises to the cytoplasm. Its subcellular location is the cytoskeleton. It is found in the microtubule organizing center. The protein resides in the centrosome. It localises to the centriole. The protein localises to the nucleus. Its subcellular location is the nucleus envelope. It is found in the nuclear pore complex. In terms of biological role, plays a fundamental role in microtubule organizing center structure and function. Required for centriole duplication and correct spindle formation. Has a role in regulating cytokinesis and genome stability via cooperation with CALM1 and CCP110. Functionally, involved in global genome nucleotide excision repair (GG-NER) by acting as component of the XPC complex. Cooperatively with Rad23b appears to stabilize Xpc. In vitro, stimulates DNA binding of the Xpc:Rad23b dimer. Its function is as follows. The XPC complex is proposed to represent the first factor bound at the sites of DNA damage and together with other core recognition factors, Xpa, RPA and the TFIIH complex, is part of the pre-incision (or initial recognition) complex. The XPC complex recognizes a wide spectrum of damaged DNA characterized by distortions of the DNA helix such as single-stranded loops, mismatched bubbles or single-stranded overhangs. The orientation of XPC complex binding appears to be crucial for inducing a productive NER. XPC complex is proposed to recognize and to interact with unpaired bases on the undamaged DNA strand which is followed by recruitment of the TFIIH complex and subsequent scanning for lesions in the opposite strand in a 5'-to-3' direction by the NER machinery. Cyclobutane pyrimidine dimers (CPDs) which are formed upon UV-induced DNA damage esacpe detection by the XPC complex due to a low degree of structural perurbation. Instead they are detected by the UV-DDB complex which in turn recruits and cooperates with the XPC complex in the respective DNA repair. As a component of the TREX-2 complex, involved in the export of mRNAs to the cytoplasm through the nuclear pores. In Mus musculus (Mouse), this protein is Centrin-2 (Cetn2).